The chain runs to 367 residues: Glutamate 5-kinase (367 aa).

Lysine 10 serves as a coordination point for ATP. Positions 50, 137, and 149 each coordinate substrate. Position 169 to 170 (169 to 170 (TD)) interacts with ATP. A PUA domain is found at 275-353 (AGEITVDEGA…QQIDAILGYE (79 aa)).

This sequence belongs to the glutamate 5-kinase family.

The protein localises to the cytoplasm. It catalyses the reaction L-glutamate + ATP = L-glutamyl 5-phosphate + ADP. Its pathway is amino-acid biosynthesis; L-proline biosynthesis; L-glutamate 5-semialdehyde from L-glutamate: step 1/2. In terms of biological role, catalyzes the transfer of a phosphate group to glutamate to form L-glutamate 5-phosphate. The chain is Glutamate 5-kinase from Salmonella paratyphi B (strain ATCC BAA-1250 / SPB7).